A 417-amino-acid chain; its full sequence is Gamma-glutamyl phosphate reductase (417 aa).

Belongs to the gamma-glutamyl phosphate reductase family.

The protein localises to the cytoplasm. The catalysed reaction is L-glutamate 5-semialdehyde + phosphate + NADP(+) = L-glutamyl 5-phosphate + NADPH + H(+). The protein operates within amino-acid biosynthesis; L-proline biosynthesis; L-glutamate 5-semialdehyde from L-glutamate: step 2/2. Functionally, catalyzes the NADPH-dependent reduction of L-glutamate 5-phosphate into L-glutamate 5-semialdehyde and phosphate. The product spontaneously undergoes cyclization to form 1-pyrroline-5-carboxylate. This Enterococcus faecalis (strain ATCC 700802 / V583) protein is Gamma-glutamyl phosphate reductase.